The chain runs to 520 residues: Cobyric acid synthase (520 aa).

The GATase cobBQ-type domain occupies 275 to 453 (VLRVAVIRLP…WHGVLENDAF (179 aa)). Cys-356 serves as the catalytic Nucleophile. The active site involves His-445.

This sequence belongs to the CobB/CobQ family. CobQ subfamily.

It participates in cofactor biosynthesis; adenosylcobalamin biosynthesis. Functionally, catalyzes amidations at positions B, D, E, and G on adenosylcobyrinic A,C-diamide. NH(2) groups are provided by glutamine, and one molecule of ATP is hydrogenolyzed for each amidation. The sequence is that of Cobyric acid synthase from Frankia casuarinae (strain DSM 45818 / CECT 9043 / HFP020203 / CcI3).